The sequence spans 408 residues: Putative mannan endo-1,4-beta-mannosidase 4 (408 aa).

The first 23 residues, 1 to 23 (MKCLCFIVLLAIVIAQSYVGVEA), serve as a signal peptide directing secretion. N-linked (GlcNAc...) asparagine glycosylation occurs at asparagine 73. 2 residues coordinate substrate: tryptophan 85 and asparagine 201. The Proton donor role is filled by glutamate 202. Glutamate 322 (nucleophile) is an active-site residue. Position 364 (tryptophan 364) interacts with substrate.

The protein belongs to the glycosyl hydrolase 5 (cellulase A) family.

The protein localises to the secreted. It catalyses the reaction Random hydrolysis of (1-&gt;4)-beta-D-mannosidic linkages in mannans, galactomannans and glucomannans.. The polypeptide is Putative mannan endo-1,4-beta-mannosidase 4 (MAN4) (Arabidopsis thaliana (Mouse-ear cress)).